Here is a 279-residue protein sequence, read N- to C-terminus: MAQRIKEEVKSEIEKLKEKGIESTLAVVIVGNDPASRSYVNSKKRTCLELGINSVEYALDTTTTQEQLENLIEKLNQDPKINGILVQLPLPNGLDESRVCKKILPQKDVDGFHPMNVGMLATGIDFEYSIKPCTPFGVIELLKRENIEIKGKHAVVIGRSNIVGKPLALLLLRENATVTICHSYTRDLKDICKTADILVAAVGKPKFVTADMVKEGAVVIDVGINRDETTKKIVGDVDFETVRRVASYITPVPGGVGPMTVAMLMKNTLFATLLQNGLI.

Residues 158–160, Ser183, and Ile224 each bind NADP(+); that span reads GRS.

Belongs to the tetrahydrofolate dehydrogenase/cyclohydrolase family. In terms of assembly, homodimer.

The catalysed reaction is (6R)-5,10-methylene-5,6,7,8-tetrahydrofolate + NADP(+) = (6R)-5,10-methenyltetrahydrofolate + NADPH. It catalyses the reaction (6R)-5,10-methenyltetrahydrofolate + H2O = (6R)-10-formyltetrahydrofolate + H(+). Its pathway is one-carbon metabolism; tetrahydrofolate interconversion. Its function is as follows. Catalyzes the oxidation of 5,10-methylenetetrahydrofolate to 5,10-methenyltetrahydrofolate and then the hydrolysis of 5,10-methenyltetrahydrofolate to 10-formyltetrahydrofolate. The chain is Bifunctional protein FolD from Caldicellulosiruptor saccharolyticus (strain ATCC 43494 / DSM 8903 / Tp8T 6331).